A 640-amino-acid polypeptide reads, in one-letter code: Serine/threonine-protein kinase WNG1 (640 aa).

An N-terminal signal peptide occupies residues 1–70 (MPEQDLASGF…GVLCTVEAGA (70 aa)). Disordered regions lie at residues 100 to 222 (PEVT…AQPT) and 237 to 280 (SHPD…DASN). Residues 104 to 120 (HASSEGSPQFESSLSQQ) show a composition bias toward polar residues. A compositionally biased stretch (basic and acidic residues) spans 124–141 (RPADRGEAHNGEEPRKDA). Over residues 175 to 186 (QRQASSAAESLA) the composition is skewed to low complexity. Residues 248–279 (FSKKQEGRRERRLAVRGDDSFARGHNRDRDAS) are compositionally biased toward basic and acidic residues. The 303-residue stretch at 291-593 (WAKIAALATG…LKQVMEDPYF (303 aa)) folds into the Protein kinase domain. ATP is bound at residue lysine 395. The active-site Proton acceptor is aspartate 486. The disordered stretch occupies residues 609–640 (PFRGDFSIDDPDAGGKMYIPPSKEQDHEQENE). A compositionally biased stretch (basic and acidic residues) spans 631-640 (KEQDHEQENE).

Belongs to the protein kinase superfamily. STE Ser/Thr protein kinase family. WNG subfamily. The cofactor is Mg(2+).

It localises to the cytoplasmic granule. The protein localises to the secreted. It is found in the parasitophorous vacuole lumen. It carries out the reaction L-seryl-[protein] + ATP = O-phospho-L-seryl-[protein] + ADP + H(+). It catalyses the reaction L-threonyl-[protein] + ATP = O-phospho-L-threonyl-[protein] + ADP + H(+). Functionally, serine/threonine-protein kinase which, at the tachyzoite stage, phosphorylates several parasitophorous vacuole (PV)-resident proteins such as GRA2, GRA6 and GRA7. By phosphorylating GRA2 and GRA6, regulates the formation of a functional intravacuolar network (IVN); IVN is composed of membranous tubules that bud from the PV membrane into the vacuolar lumen. Plays a role in the establishement of chronic infection in the host by controlling cyst formation in the host tissues. The polypeptide is Serine/threonine-protein kinase WNG1 (Toxoplasma gondii).